The chain runs to 246 residues: 3-deoxy-manno-octulosonate cytidylyltransferase (246 aa).

Belongs to the KdsB family.

The protein resides in the cytoplasm. It carries out the reaction 3-deoxy-alpha-D-manno-oct-2-ulosonate + CTP = CMP-3-deoxy-beta-D-manno-octulosonate + diphosphate. The protein operates within nucleotide-sugar biosynthesis; CMP-3-deoxy-D-manno-octulosonate biosynthesis; CMP-3-deoxy-D-manno-octulosonate from 3-deoxy-D-manno-octulosonate and CTP: step 1/1. Its pathway is bacterial outer membrane biogenesis; lipopolysaccharide biosynthesis. Functionally, activates KDO (a required 8-carbon sugar) for incorporation into bacterial lipopolysaccharide in Gram-negative bacteria. This Bradyrhizobium diazoefficiens (strain JCM 10833 / BCRC 13528 / IAM 13628 / NBRC 14792 / USDA 110) protein is 3-deoxy-manno-octulosonate cytidylyltransferase.